A 273-amino-acid polypeptide reads, in one-letter code: Large ribosomal subunit protein uL2 (273 aa).

Positions 228–273 (VDHPHGGGEGKTSGGRHPVTPWGFPTKGKKTRKNKRTSKFIVKKRK) are disordered. Over residues 254-273 (KGKKTRKNKRTSKFIVKKRK) the composition is skewed to basic residues.

This sequence belongs to the universal ribosomal protein uL2 family. Part of the 50S ribosomal subunit. Forms a bridge to the 30S subunit in the 70S ribosome.

In terms of biological role, one of the primary rRNA binding proteins. Required for association of the 30S and 50S subunits to form the 70S ribosome, for tRNA binding and peptide bond formation. It has been suggested to have peptidyltransferase activity; this is somewhat controversial. Makes several contacts with the 16S rRNA in the 70S ribosome. The chain is Large ribosomal subunit protein uL2 from Rickettsia rickettsii (strain Iowa).